A 40-amino-acid chain; its full sequence is Large ribosomal subunit protein bL36 (40 aa).

Belongs to the bacterial ribosomal protein bL36 family.

In Corynebacterium diphtheriae (strain ATCC 700971 / NCTC 13129 / Biotype gravis), this protein is Large ribosomal subunit protein bL36.